The following is an 874-amino-acid chain: Probable inorganic carbon transporter subunit DabA (874 aa).

Positions 398, 400, 580, and 595 each coordinate Zn(2+).

The protein belongs to the inorganic carbon transporter (TC 9.A.2) DabA family. In terms of assembly, forms a complex with DabB. Requires Zn(2+) as cofactor.

The protein resides in the cell membrane. Functionally, part of an energy-coupled inorganic carbon pump. The protein is Probable inorganic carbon transporter subunit DabA of Bacillus thuringiensis subsp. konkukian (strain 97-27).